The sequence spans 258 residues: Indole-3-glycerol phosphate synthase (258 aa).

It belongs to the TrpC family.

The catalysed reaction is 1-(2-carboxyphenylamino)-1-deoxy-D-ribulose 5-phosphate + H(+) = (1S,2R)-1-C-(indol-3-yl)glycerol 3-phosphate + CO2 + H2O. It participates in amino-acid biosynthesis; L-tryptophan biosynthesis; L-tryptophan from chorismate: step 4/5. The chain is Indole-3-glycerol phosphate synthase from Chlorobium phaeobacteroides (strain DSM 266 / SMG 266 / 2430).